A 1528-amino-acid chain; its full sequence is Mitogen-activated protein kinase kinae kinase MCK1 (1528 aa).

The segment covering 1-11 (MYPGSSQSRPY) has biased composition (low complexity). 10 disordered regions span residues 1–84 (MYPG…PAPR), 109–208 (ATAP…VPGI), 303–418 (VHAR…NNVR), 449–481 (INGR…KLPF), 607–652 (VKPP…EARL), 695–731 (GKPV…APSA), 746–786 (VQGS…SQPM), 811–929 (SANN…SDDG), 943–1012 (KKAK…EDGK), and 1086–1191 (ATPL…ALLR). Residues 12–21 (QVPPPPPMSP) show a composition bias toward pro residues. The span at 22 to 31 (PLSQMHQQMS) shows a compositional bias: low complexity. The segment covering 53–64 (APPPPPPGPPPA) has biased composition (pro residues). The segment covering 157–173 (SSQTWQTTSSSSTNTAS) has biased composition (low complexity). Polar residues-rich tracts occupy residues 174–183 (VNDNVQSNAP), 191–205 (NNSA…SSNV), and 318–327 (HGRQGSINSR). Over residues 328 to 337 (GNDKGTHDGS) the composition is skewed to basic and acidic residues. Residues 338-363 (DSPNTPSSQSRSTTIPTFPDGSSFSN) are compositionally biased toward polar residues. Residues 396 to 408 (SSTPKSSTLSVSP) are compositionally biased toward low complexity. Positions 409-418 (HSSRFGNNVR) are enriched in polar residues. 2 stretches are compositionally biased toward polar residues: residues 613 to 622 (SQQSTWSAGD) and 630 to 641 (GTSSSMSRQQNT). 2 stretches are compositionally biased toward basic and acidic residues: residues 642-652 (LKDDQSEEARL) and 698-714 (VDFD…KNTD). Positions 846 to 860 (RSQTAGDLSPISQMP) are enriched in polar residues. Positions 917 to 928 (QSDDDSGDDSDD) are enriched in acidic residues. The span at 977-986 (VSFNSPQSAR) shows a compositional bias: polar residues. Residues 1001-1012 (PKSDMWDSEDGK) show a composition bias toward basic and acidic residues. The segment covering 1086-1111 (ATPLNSLPPSRVQSMYNESDTLGSDE) has biased composition (polar residues). A compositionally biased stretch (basic and acidic residues) spans 1142–1152 (SIREKARGAHE). The segment covering 1158–1188 (TQTSMAAPQGLSRSGGTPATETQPTQNNSSA) has biased composition (polar residues). The Protein kinase domain occupies 1238-1507 (WFKGQLIGKG…NKLLSQHPFC (270 aa)). ATP is bound by residues 1244-1252 (IGKGTYGRV) and Lys-1267.

The protein belongs to the protein kinase superfamily. STE Ser/Thr protein kinase family. MAP kinase kinase kinase subfamily. As to quaternary structure, interacts with the adapter protein MST50 and MIP11.

It catalyses the reaction L-seryl-[protein] + ATP = O-phospho-L-seryl-[protein] + ADP + H(+). The catalysed reaction is L-threonyl-[protein] + ATP = O-phospho-L-threonyl-[protein] + ADP + H(+). Functionally, mitogen-activated protein kinase kinase kinase; part of the MCK1-MKK2-MPS1 MAP kinase (MAPK) signal transduction cascade that is essential for appressorium formation, penetration and invasive growth. Beside its role in pathogenesis, the MPS1 cascade is active in conidiation and cellular stress responses. Targets downstream of the the MPS1-MAPK pathway include transcription factors MIG1 and SWI6, as well as GSK1 and MPG1. The chain is Mitogen-activated protein kinase kinae kinase MCK1 from Pyricularia oryzae (strain 70-15 / ATCC MYA-4617 / FGSC 8958) (Rice blast fungus).